The chain runs to 131 residues: uncharacterized protein (131 aa).

Helical transmembrane passes span 52–72 (LIMIGIIELSYFISLGGFYLV) and 97–117 (SDIISIFCSIAFVLFCIYDVG).

It localises to the membrane. This is an uncharacterized protein from Acanthamoeba polyphaga mimivirus (APMV).